The sequence spans 163 residues: Superoxide dismutase [Mn] (163 aa).

Residues His-2, His-50, Asp-134, and His-138 each coordinate Mn(2+).

Belongs to the iron/manganese superoxide dismutase family. It depends on Mn(2+) as a cofactor.

The catalysed reaction is 2 superoxide + 2 H(+) = H2O2 + O2. Functionally, destroys superoxide anion radicals which are normally produced within the cells and which are toxic to biological systems. The sequence is that of Superoxide dismutase [Mn] (sodA) from Mycobacterium scrofulaceum.